We begin with the raw amino-acid sequence, 178 residues long: ATP synthase subunit delta (178 aa).

It belongs to the ATPase delta chain family. As to quaternary structure, F-type ATPases have 2 components, F(1) - the catalytic core - and F(0) - the membrane proton channel. F(1) has five subunits: alpha(3), beta(3), gamma(1), delta(1), epsilon(1). F(0) has three main subunits: a(1), b(2) and c(10-14). The alpha and beta chains form an alternating ring which encloses part of the gamma chain. F(1) is attached to F(0) by a central stalk formed by the gamma and epsilon chains, while a peripheral stalk is formed by the delta and b chains.

Its subcellular location is the cell membrane. F(1)F(0) ATP synthase produces ATP from ADP in the presence of a proton or sodium gradient. F-type ATPases consist of two structural domains, F(1) containing the extramembraneous catalytic core and F(0) containing the membrane proton channel, linked together by a central stalk and a peripheral stalk. During catalysis, ATP synthesis in the catalytic domain of F(1) is coupled via a rotary mechanism of the central stalk subunits to proton translocation. Its function is as follows. This protein is part of the stalk that links CF(0) to CF(1). It either transmits conformational changes from CF(0) to CF(1) or is implicated in proton conduction. The protein is ATP synthase subunit delta of Streptococcus pneumoniae (strain CGSP14).